We begin with the raw amino-acid sequence, 56 residues long: Small ribosomal subunit protein uS14 (56 aa).

Positions 21, 24, 39, and 42 each coordinate Zn(2+).

It belongs to the universal ribosomal protein uS14 family. Zinc-binding uS14 subfamily. Part of the 30S ribosomal subunit. It depends on Zn(2+) as a cofactor.

In terms of biological role, binds 16S rRNA, required for the assembly of 30S particles. The polypeptide is Small ribosomal subunit protein uS14 (Thermococcus kodakarensis (strain ATCC BAA-918 / JCM 12380 / KOD1) (Pyrococcus kodakaraensis (strain KOD1))).